The chain runs to 344 residues: tRNA(Ile)-lysidine synthase (344 aa).

Residue 43-48 (SGGADS) participates in ATP binding.

The protein belongs to the tRNA(Ile)-lysidine synthase family.

The protein localises to the cytoplasm. The catalysed reaction is cytidine(34) in tRNA(Ile2) + L-lysine + ATP = lysidine(34) in tRNA(Ile2) + AMP + diphosphate + H(+). In terms of biological role, ligates lysine onto the cytidine present at position 34 of the AUA codon-specific tRNA(Ile) that contains the anticodon CAU, in an ATP-dependent manner. Cytidine is converted to lysidine, thus changing the amino acid specificity of the tRNA from methionine to isoleucine. The polypeptide is tRNA(Ile)-lysidine synthase (Bordetella bronchiseptica (strain ATCC BAA-588 / NCTC 13252 / RB50) (Alcaligenes bronchisepticus)).